We begin with the raw amino-acid sequence, 65 residues long: Large ribosomal subunit protein uL29 (65 aa).

Positions 30–49 (ERSSVAMGGAPSSPGKMRSI) are disordered.

It belongs to the universal ribosomal protein uL29 family.

The protein is Large ribosomal subunit protein uL29 of Picrophilus torridus (strain ATCC 700027 / DSM 9790 / JCM 10055 / NBRC 100828 / KAW 2/3).